Consider the following 269-residue polypeptide: Large ribosomal subunit protein uL3m (269 aa).

The transit peptide at 1–19 (MSKFLQGSIFSISKLHVRY) directs the protein to the mitochondrion.

This sequence belongs to the universal ribosomal protein uL3 family. Component of the mitochondrial large ribosomal subunit (mt-LSU). Mature yeast 74S mitochondrial ribosomes consist of a small (37S) and a large (54S) subunit. The 37S small subunit contains a 15S ribosomal RNA (15S mt-rRNA) and 34 different proteins. The 54S large subunit contains a 21S rRNA (21S mt-rRNA) and 46 different proteins.

It is found in the mitochondrion. Component of the mitochondrial ribosome (mitoribosome), a dedicated translation machinery responsible for the synthesis of mitochondrial genome-encoded proteins, including at least some of the essential transmembrane subunits of the mitochondrial respiratory chain. The mitoribosomes are attached to the mitochondrial inner membrane and translation products are cotranslationally integrated into the membrane. The polypeptide is Large ribosomal subunit protein uL3m (MRPL9) (Saccharomyces cerevisiae (strain ATCC 204508 / S288c) (Baker's yeast)).